The sequence spans 74 residues: MRADIHPKYQTLVATCSCGNVIETRSALGKETLYLDVCSACHPFYTGKQKNVDTGGRIDKFKQRFSGMSRSIKR.

Zn(2+) contacts are provided by cysteine 16, cysteine 18, cysteine 38, and cysteine 41.

Belongs to the bacterial ribosomal protein bL31 family. Type A subfamily. In terms of assembly, part of the 50S ribosomal subunit. Requires Zn(2+) as cofactor.

Functionally, binds the 23S rRNA. The chain is Large ribosomal subunit protein bL31 from Acinetobacter baylyi (strain ATCC 33305 / BD413 / ADP1).